Consider the following 117-residue polypeptide: Large ribosomal subunit protein uL24 (117 aa).

The protein belongs to the universal ribosomal protein uL24 family. In terms of assembly, part of the 50S ribosomal subunit.

In terms of biological role, one of two assembly initiator proteins, it binds directly to the 5'-end of the 23S rRNA, where it nucleates assembly of the 50S subunit. Functionally, one of the proteins that surrounds the polypeptide exit tunnel on the outside of the subunit. In Nostoc punctiforme (strain ATCC 29133 / PCC 73102), this protein is Large ribosomal subunit protein uL24.